The chain runs to 376 residues: Chaperone protein DnaJ (376 aa).

A J domain is found at 5-70; it reads DYYEVLGVAK…QKRAAYDQYG (66 aa). The segment at 136-214 adopts a CR-type zinc-finger fold; that stretch reads GYDTQIRVPS…CHGSGKVKET (79 aa). Zn(2+)-binding residues include C149, C152, C166, C169, C188, C191, C202, and C205. 4 CXXCXGXG motif repeats span residues 149–156, 166–173, 188–195, and 202–209; these read CGICHGSG, CPTCHGQG, CPKCHGTG, and CVHCHGSG.

It belongs to the DnaJ family. As to quaternary structure, homodimer. The cofactor is Zn(2+).

It localises to the cytoplasm. Participates actively in the response to hyperosmotic and heat shock by preventing the aggregation of stress-denatured proteins and by disaggregating proteins, also in an autonomous, DnaK-independent fashion. Unfolded proteins bind initially to DnaJ; upon interaction with the DnaJ-bound protein, DnaK hydrolyzes its bound ATP, resulting in the formation of a stable complex. GrpE releases ADP from DnaK; ATP binding to DnaK triggers the release of the substrate protein, thus completing the reaction cycle. Several rounds of ATP-dependent interactions between DnaJ, DnaK and GrpE are required for fully efficient folding. Also involved, together with DnaK and GrpE, in the DNA replication of plasmids through activation of initiation proteins. The polypeptide is Chaperone protein DnaJ (Burkholderia thailandensis (strain ATCC 700388 / DSM 13276 / CCUG 48851 / CIP 106301 / E264)).